Consider the following 451-residue polypeptide: 2-succinylbenzoate--CoA ligase (451 aa).

It belongs to the ATP-dependent AMP-binding enzyme family. MenE subfamily.

It carries out the reaction 2-succinylbenzoate + ATP + CoA = 2-succinylbenzoyl-CoA + AMP + diphosphate. It participates in quinol/quinone metabolism; 1,4-dihydroxy-2-naphthoate biosynthesis; 1,4-dihydroxy-2-naphthoate from chorismate: step 5/7. Its pathway is quinol/quinone metabolism; menaquinone biosynthesis. Functionally, converts 2-succinylbenzoate (OSB) to 2-succinylbenzoyl-CoA (OSB-CoA). The chain is 2-succinylbenzoate--CoA ligase from Escherichia coli (strain K12).